The primary structure comprises 101 residues: Small ribosomal subunit protein uS10 (101 aa).

Belongs to the universal ribosomal protein uS10 family. As to quaternary structure, part of the 30S ribosomal subunit.

Functionally, involved in the binding of tRNA to the ribosomes. The sequence is that of Small ribosomal subunit protein uS10 from Parabacteroides distasonis (strain ATCC 8503 / DSM 20701 / CIP 104284 / JCM 5825 / NCTC 11152).